A 113-amino-acid polypeptide reads, in one-letter code: U11-theraphotoxin-Hhn1a (113 aa).

An N-terminal signal peptide occupies residues 1-21 (MNTVRVTFLPVFVLAVSLGQA). The propeptide occupies 22–74 (DKDENRMEMQEKTEQGKSYLDFAENLLLQKLEELEAKLLEEDSEESRNSRQKR). The disordered stretch occupies residues 61–83 (EEDSEESRNSRQKRCIGEGVPCD). 3 disulfide bridges follow: Cys75-Cys90, Cys82-Cys95, and Cys89-Cys110.

Belongs to the neurotoxin 14 (magi-1) family. 01 (HNTX-16) subfamily. In terms of tissue distribution, expressed by the venom gland.

It is found in the secreted. In Cyriopagopus hainanus (Chinese bird spider), this protein is U11-theraphotoxin-Hhn1a.